The sequence spans 171 residues: MPYSLEEQTYFMQEALKEAEKSLQKAEIPIGCVIVKDGEIIGRGHNAREESNQAIMHAEMMAINEANAHEGNWRLLDTTLFVTIEPCVMCSGAIGLARIPHVIYGASNQKFGGADSLYQILTDERLNHRVQVERGLLAADCANIMQTFFRQGRERKKIAKHLIKEQSDPFD.

The region spanning E6–E133 is the CMP/dCMP-type deaminase domain. Residue H57 participates in Zn(2+) binding. The Proton donor role is filled by E59. The Zn(2+) site is built by C87 and C90.

Belongs to the cytidine and deoxycytidylate deaminase family. Homodimer. Zn(2+) serves as cofactor.

It carries out the reaction adenosine(34) in tRNA + H2O + H(+) = inosine(34) in tRNA + NH4(+). Catalyzes the deamination of adenosine to inosine at the wobble position 34 of tRNA(Arg2). This chain is tRNA-specific adenosine deaminase, found in Streptococcus pyogenes serotype M3 (strain ATCC BAA-595 / MGAS315).